The sequence spans 295 residues: Small ribosomal subunit protein bS1 (295 aa).

S1 motif domains follow at residues 28–97 (GQLV…VSLR), 115–179 (GQTV…LSER), and 193–261 (GQLI…LSTK).

Belongs to the bacterial ribosomal protein bS1 family.

In terms of biological role, binds mRNA. In Synechococcus elongatus (strain ATCC 33912 / PCC 7942 / FACHB-805) (Anacystis nidulans R2), this protein is Small ribosomal subunit protein bS1 (rpsA).